A 532-amino-acid polypeptide reads, in one-letter code: Glucose-6-phosphate isomerase (532 aa).

Glu330 functions as the Proton donor in the catalytic mechanism. Residues His359 and Lys461 contribute to the active site.

Belongs to the GPI family.

Its subcellular location is the cytoplasm. It carries out the reaction alpha-D-glucose 6-phosphate = beta-D-fructose 6-phosphate. Its pathway is carbohydrate biosynthesis; gluconeogenesis. It functions in the pathway carbohydrate degradation; glycolysis; D-glyceraldehyde 3-phosphate and glycerone phosphate from D-glucose: step 2/4. In terms of biological role, catalyzes the reversible isomerization of glucose-6-phosphate to fructose-6-phosphate. The chain is Glucose-6-phosphate isomerase from Synechococcus sp. (strain CC9902).